The sequence spans 1081 residues: Isoleucine--tRNA ligase (1081 aa).

The 'HIGH' region motif lies at 53 to 63; sequence PFATGLPHYGN. The 'KMSKS' region motif lies at 607 to 611; that stretch reads KMSKS. Lys-610 provides a ligand contact to ATP.

The protein belongs to the class-I aminoacyl-tRNA synthetase family.

The catalysed reaction is tRNA(Ile) + L-isoleucine + ATP = L-isoleucyl-tRNA(Ile) + AMP + diphosphate. The polypeptide is Isoleucine--tRNA ligase (ILSA) (Tetrahymena thermophila).